Consider the following 518-residue polypeptide: Protein nucleotidyltransferase YdiU (518 aa).

Residues Gly109, Gly111, Arg112, Lys131, Asp143, Gly144, Arg194, and Arg201 each contribute to the ATP site. Asp270 serves as the catalytic Proton acceptor. Mg(2+)-binding residues include Asn271 and Asp280. Asp280 contacts ATP.

Belongs to the SELO family. Mg(2+) is required as a cofactor. Requires Mn(2+) as cofactor.

The enzyme catalyses L-seryl-[protein] + ATP = 3-O-(5'-adenylyl)-L-seryl-[protein] + diphosphate. It catalyses the reaction L-threonyl-[protein] + ATP = 3-O-(5'-adenylyl)-L-threonyl-[protein] + diphosphate. The catalysed reaction is L-tyrosyl-[protein] + ATP = O-(5'-adenylyl)-L-tyrosyl-[protein] + diphosphate. It carries out the reaction L-histidyl-[protein] + UTP = N(tele)-(5'-uridylyl)-L-histidyl-[protein] + diphosphate. The enzyme catalyses L-seryl-[protein] + UTP = O-(5'-uridylyl)-L-seryl-[protein] + diphosphate. It catalyses the reaction L-tyrosyl-[protein] + UTP = O-(5'-uridylyl)-L-tyrosyl-[protein] + diphosphate. Nucleotidyltransferase involved in the post-translational modification of proteins. It can catalyze the addition of adenosine monophosphate (AMP) or uridine monophosphate (UMP) to a protein, resulting in modifications known as AMPylation and UMPylation. The polypeptide is Protein nucleotidyltransferase YdiU (Paraburkholderia xenovorans (strain LB400)).